Consider the following 255-residue polypeptide: uncharacterized protein (255 aa).

Residues 1-10 (MSDSIHRRKV) show a composition bias toward basic residues. The segment at 1-78 (MSDSIHRRKV…SPMRGLPMEE (78 aa)) is disordered. The span at 44–61 (VFERSFSEPSLNRHRDGQ) shows a compositional bias: basic and acidic residues.

This is an uncharacterized protein from Arabidopsis thaliana (Mouse-ear cress).